We begin with the raw amino-acid sequence, 106 residues long: MSTLLKSAKSIVPLMDRVLVQRIKAQAKTASGLYLPEKNVEKLNQAEVVAVGPGFTDANGNKVVPQVKVGDQVLIPQFGGSTIKLGNDDEVILFRDAEILAKIAKD.

The residue at position 2 (S2) is an N-acetylserine. S31 carries the post-translational modification Phosphoserine.

It belongs to the GroES chaperonin family. Homohexamer. In terms of processing, the N-terminus is blocked.

Its subcellular location is the mitochondrion matrix. Its function is as follows. Eukaryotic CPN10 homolog which is essential for mitochondrial protein biogenesis, together with CPN60. Binds to CPN60 in the presence of Mg-ATP and suppresses the ATPase activity of the latter. In Saccharomyces cerevisiae (strain ATCC 204508 / S288c) (Baker's yeast), this protein is 10 kDa heat shock protein, mitochondrial (HSP10).